Consider the following 338-residue polypeptide: Lipoate-protein ligase A (338 aa).

In terms of domain architecture, BPL/LPL catalytic spans 29-216 (PATQRVLFLW…AFFAHYGERV (188 aa)). Residues Arg-71, 76 to 79 (GAVF), and Lys-134 contribute to the ATP site. Residue Lys-134 coordinates (R)-lipoate.

The protein belongs to the LplA family. As to quaternary structure, monomer.

Its subcellular location is the cytoplasm. It carries out the reaction L-lysyl-[lipoyl-carrier protein] + (R)-lipoate + ATP = N(6)-[(R)-lipoyl]-L-lysyl-[lipoyl-carrier protein] + AMP + diphosphate + H(+). It participates in protein modification; protein lipoylation via exogenous pathway; protein N(6)-(lipoyl)lysine from lipoate: step 1/2. It functions in the pathway protein modification; protein lipoylation via exogenous pathway; protein N(6)-(lipoyl)lysine from lipoate: step 2/2. Catalyzes both the ATP-dependent activation of exogenously supplied lipoate to lipoyl-AMP and the transfer of the activated lipoyl onto the lipoyl domains of lipoate-dependent enzymes. The chain is Lipoate-protein ligase A from Escherichia coli O9:H4 (strain HS).